We begin with the raw amino-acid sequence, 141 residues long: Nucleoside diphosphate kinase (141 aa).

Residues Lys11, Phe59, Arg87, Thr93, Arg104, and Asn114 each contribute to the ATP site. The Pros-phosphohistidine intermediate role is filled by His117.

Belongs to the NDK family. In terms of assembly, homotetramer. It depends on Mg(2+) as a cofactor.

The protein resides in the cytoplasm. The catalysed reaction is a 2'-deoxyribonucleoside 5'-diphosphate + ATP = a 2'-deoxyribonucleoside 5'-triphosphate + ADP. It carries out the reaction a ribonucleoside 5'-diphosphate + ATP = a ribonucleoside 5'-triphosphate + ADP. Its function is as follows. Major role in the synthesis of nucleoside triphosphates other than ATP. The ATP gamma phosphate is transferred to the NDP beta phosphate via a ping-pong mechanism, using a phosphorylated active-site intermediate. The chain is Nucleoside diphosphate kinase from Pseudomonas entomophila (strain L48).